The chain runs to 247 residues: 2,5-diamino-6-ribosylamino-4(3H)-pyrimidinone 5'-phosphate reductase (247 aa).

Residues Thr-75, Asp-79, Gly-165, and 187–191 (GASII) contribute to the NADP(+) site.

Belongs to the HTP reductase family. As to quaternary structure, homodimer.

It carries out the reaction 2,5-diamino-6-(1-D-ribitylamino)pyrimidin-4(3H)-one 5'-phosphate + NADP(+) = 2,5-diamino-6-(1-D-ribosylamino)pyrimidin-4(3H)-one 5'-phosphate + NADPH + H(+). The catalysed reaction is 2,5-diamino-6-(1-D-ribitylamino)pyrimidin-4(3H)-one 5'-phosphate + NAD(+) = 2,5-diamino-6-(1-D-ribosylamino)pyrimidin-4(3H)-one 5'-phosphate + NADH + H(+). The protein operates within cofactor biosynthesis; riboflavin biosynthesis. Functionally, catalyzes an early step in riboflavin biosynthesis, the NADPH-dependent reduction of the ribose side chain of 2,5-diamino-6-ribosylamino-4(3H)-pyrimidinone 5'-phosphate, yielding 2,5-diamino-6-ribitylamino-4(3H)-pyrimidinone 5'-phosphate. The chain is 2,5-diamino-6-ribosylamino-4(3H)-pyrimidinone 5'-phosphate reductase (RIB7) from Debaryomyces hansenii (strain ATCC 36239 / CBS 767 / BCRC 21394 / JCM 1990 / NBRC 0083 / IGC 2968) (Yeast).